A 528-amino-acid polypeptide reads, in one-letter code: Phenylalanine--tRNA ligase alpha subunit (528 aa).

The L-phenylalanine site is built by T365 and F444. E446 contacts Mg(2+). F469 serves as a coordination point for L-phenylalanine.

The protein belongs to the class-II aminoacyl-tRNA synthetase family. Phe-tRNA synthetase alpha subunit type 2 subfamily. As to quaternary structure, tetramer of two alpha and two beta subunits. Requires Mg(2+) as cofactor.

It is found in the cytoplasm. The catalysed reaction is tRNA(Phe) + L-phenylalanine + ATP = L-phenylalanyl-tRNA(Phe) + AMP + diphosphate + H(+). The chain is Phenylalanine--tRNA ligase alpha subunit from Borreliella burgdorferi (strain ATCC 35210 / DSM 4680 / CIP 102532 / B31) (Borrelia burgdorferi).